The primary structure comprises 173 residues: MIYFVFVVLMGLVVGLMAVASNPAPYFAALGLVFSAVVGCGFLVGYGGSFLSLVLFLIYLGGMLVVFAYSAALAAEPYPESWGSWSVFLYILVYLFGFLLVGYYCYGWWYDFYWMSLDVFGEMSVLSGDVSGVPMVYSSGGFLLLVTGWVLLLALFVVLEITRGLSRGALRAV.

Transmembrane regions (helical) follow at residues 1–21, 27–47, 53–73, 82–102, 106–126, and 141–161; these read MIYFVFVVLMGLVVGLMAVAS, FAALGLVFSAVVGCGFLVGYG, LVLFLIYLGGMLVVFAYSAAL, WGSWSVFLYILVYLFGFLLVG, YGWWYDFYWMSLDVFGEMSVL, and GFLLLVTGWVLLLALFVVLEI.

Belongs to the complex I subunit 6 family.

Its subcellular location is the mitochondrion membrane. The catalysed reaction is a ubiquinone + NADH + 5 H(+)(in) = a ubiquinol + NAD(+) + 4 H(+)(out). In terms of biological role, core subunit of the mitochondrial membrane respiratory chain NADH dehydrogenase (Complex I) that is believed to belong to the minimal assembly required for catalysis. Complex I functions in the transfer of electrons from NADH to the respiratory chain. The immediate electron acceptor for the enzyme is believed to be ubiquinone. This chain is NADH-ubiquinone oxidoreductase chain 6 (MT-ND6), found in Latimeria chalumnae (Coelacanth).